Here is a 235-residue protein sequence, read N- to C-terminus: Small ribosomal subunit protein eS4 (235 aa).

Residues 43–114 form the S4 RNA-binding domain; it reads IPLLLIVRDM…DPHRFLRLIE (72 aa).

Belongs to the eukaryotic ribosomal protein eS4 family.

The sequence is that of Small ribosomal subunit protein eS4 from Korarchaeum cryptofilum (strain OPF8).